The following is a 478-amino-acid chain: Dihydrolipoyl dehydrogenase (478 aa).

FAD contacts are provided by residues 34 to 49 (EKYI…GGTC), lysine 58, and glycine 122. The cysteines at positions 49 and 54 are disulfide-linked. NAD(+) is bound by residues 188-192 (GAGVI), glutamate 211, valine 245, and 276-279 (AVGR). 2 residues coordinate FAD: aspartate 319 and alanine 327. Catalysis depends on histidine 451, which acts as the Proton acceptor.

It belongs to the class-I pyridine nucleotide-disulfide oxidoreductase family. Homodimer. FAD is required as a cofactor.

The protein localises to the cytoplasm. It catalyses the reaction N(6)-[(R)-dihydrolipoyl]-L-lysyl-[protein] + NAD(+) = N(6)-[(R)-lipoyl]-L-lysyl-[protein] + NADH + H(+). Functionally, the branched-chain alpha-keto dehydrogenase complex catalyzes the overall conversion of alpha-keto acids to acyl-CoA and CO(2). It contains multiple copies of 3 enzymatic components: branched-chain alpha-keto acid decarboxylase (E1), lipoamide acyltransferase (E2) and lipoamide dehydrogenase (E3). Its function is as follows. Also acts in the glycine cleavage system. The polypeptide is Dihydrolipoyl dehydrogenase (lpdG) (Pseudomonas aeruginosa (strain ATCC 15692 / DSM 22644 / CIP 104116 / JCM 14847 / LMG 12228 / 1C / PRS 101 / PAO1)).